The following is a 148-amino-acid chain: MVHFTAEEKAIITSLWAKVNVEETGGEALGRLLVVYPWTQRFFDNFGNLSSASAIMGNPKVKAHGKKVLSSLGEAVTHMDDLKDAFAHLSRLHCDELHVDPENFRVTPGKRAVIVLAHHFGREFTPQVQAAWKKLMSAVAIAMGHKYH.

A Globin domain is found at 3-148 (HFTAEEKAII…VAIAMGHKYH (146 aa)). Heme b-binding residues include His-64 and His-93.

The protein belongs to the globin family. As to quaternary structure, heterotetramer of two alpha chains and two gamma chains in fetal hemoglobin (Hb F). Red blood cells.

In terms of biological role, gamma chains make up the fetal hemoglobin F, in combination with alpha chains. This chain is Hemoglobin subunit gamma (HBG), found in Carlito syrichta (Philippine tarsier).